The following is a 207-amino-acid chain: Alpha-1-acid glycoprotein 2 (207 aa).

The N-terminal stretch at 1-18 (MALHMILVMVSLLPLLEA) is a signal peptide. Residue glutamine 19 is modified to Pyrrolidone carboxylic acid. Asparagine 25, asparagine 34, asparagine 76, asparagine 94, and asparagine 104 each carry an N-linked (GlcNAc...) asparagine glycan. Cysteine 91 and cysteine 184 are joined by a disulfide. The interval 188–207 (EKQQLELEKETKKDPEEGQA) is disordered.

Belongs to the calycin superfamily. Lipocalin family. As to expression, expressed by the liver and secreted in plasma.

Its subcellular location is the secreted. Functionally, functions as a transport protein in the blood stream. Binds various ligands in the interior of its beta-barrel domain. Appears to function in modulating the activity of the immune system during the acute-phase reaction. The chain is Alpha-1-acid glycoprotein 2 (Orm2) from Mus musculus (Mouse).